Consider the following 135-residue polypeptide: uncharacterized protein (135 aa).

The region spanning 8–123 (PKGIIVLKTL…IFIYVAINKT (116 aa)) is the HotDog ACOT-type domain.

Belongs to the acyl coenzyme A hydrolase family.

This is an uncharacterized protein from Buchnera aphidicola subsp. Acyrthosiphon pisum (strain APS) (Acyrthosiphon pisum symbiotic bacterium).